A 60-amino-acid chain; its full sequence is Large ribosomal subunit protein bL32 (60 aa).

Belongs to the bacterial ribosomal protein bL32 family.

In Hydrogenobaculum sp. (strain Y04AAS1), this protein is Large ribosomal subunit protein bL32.